Here is a 1450-residue protein sequence, read N- to C-terminus: Collagen alpha-1(I) chain (1450 aa).

The N-terminal stretch at 1 to 22 (MFSFVDNRLLVLLAACVLLVRA) is a signal peptide. A propeptide spans 23-148 (LDQEDIESGL…PPGLGGNFAP (126 aa)) (N-terminal propeptide). In terms of domain architecture, VWFC spans 31 to 90 (GLCHQEGTTYSDKDVWKPEPCVICVCDNGNIMCDDVTCGDYPVDCPNAEIPFGECCPVCP). Residues 97-1201 (YSEQTGVEGP…EPKSHGDGRY (1105 aa)) form a disordered region. The span at 106–116 (PKGEVGPKGDR) shows a compositional bias: basic and acidic residues. Positions 130–140 (LPGPPGPPGPP) are enriched in pro residues. Residue glutamine 149 is modified to Pyrrolidone carboxylic acid. Position 157 is an allysine (lysine 157). Pro residues predominate over residues 166 to 181 (PMGPMGPRGPPGPSGS). Residues proline 176, proline 182, proline 194, proline 197, proline 212, proline 227, proline 242, and proline 248 each carry the 4-hydroxyproline modification. Residues 182 to 206 (PGPQGFQGPSGEPGEPGAAGALGPR) show a composition bias toward low complexity. The segment covering 215–229 (NGDDGESGKPGRPGE) has biased composition (basic and acidic residues). Residue lysine 251 is modified to 5-hydroxylysine; alternate. Lysine 251 carries an O-linked (Gal...) hydroxylysine; alternate glycan. Residues 266-292 (NGPAGPKGEPGNPGENGAPGQAGPRGL) are compositionally biased toward low complexity. Proline 275, proline 278, proline 284, proline 293, proline 299, proline 314, proline 320, proline 329, proline 332, proline 359, proline 362, proline 374, proline 380, proline 389, proline 395, proline 398, and proline 413 each carry 4-hydroxyproline. Residues 317–331 (AGPPGPTGPTGPPGF) show a composition bias toward pro residues. Over residues 352 to 374 (PQGARGEPGAPGPAGAAGPSGNP) the composition is skewed to low complexity. The span at 378–387 (GQPGGKGATG) shows a compositional bias: gly residues. Low complexity predominate over residues 388 to 443 (SPGIAGAPGFPGARGAPGPQGPAGAPGPKGNNGEPGAQGNKGEPGAKGEPGPAGVQ). Lysine 416 bears the 5-hydroxylysine mark. A 4-hydroxyproline mark is found at proline 422, proline 437, proline 446, proline 461, proline 467, proline 476, and proline 482. Gly residues predominate over residues 471–480 (GERGGPGSRG). Lysine 491 carries the 5-hydroxylysine modification. Proline 494, proline 515, proline 521, proline 530, proline 533, proline 551, proline 569, proline 578, proline 590, proline 608, proline 626, proline 632, proline 644, proline 650, proline 656, and proline 668 each carry 4-hydroxyproline. 2 stretches are compositionally biased toward low complexity: residues 568–578 (FPGPKGAAGEP) and 586–596 (VAGPPGATGAP). Positions 637-650 (PAGEAGKPGEQGAP) are enriched in low complexity. A compositionally biased stretch (gly residues) spans 669–678 (GERGGQGPAG). The span at 679-701 (AQGPRGSPGSPGNDGAKGEAGAA) shows a compositional bias: low complexity. 4-hydroxyproline is present on residues proline 689, proline 704, proline 710, proline 716, and proline 725. Gly residues predominate over residues 702–711 (GAPGGRGPPG). The residue at position 737 (lysine 737) is a 5-hydroxylysine. Proline 743, proline 758, proline 764, proline 785, proline 791, proline 794, proline 803, proline 809, proline 827, proline 836, and proline 845 each carry 4-hydroxyproline. Residues 796–806 (PAGICGPPGAD) show a composition bias toward low complexity. Positions 817–869 (DAGPKGDAGAPGPAGPTGAPGPAGNVGAPGPKGTRGAAGPPGATGFPGAAGRL) are enriched in low complexity. Lysine 848 is subject to 5-hydroxylysine. 4-hydroxyproline occurs at positions 857 and 863. The residue at position 871 (proline 871) is a 3-hydroxyproline. Proline 872, proline 881, proline 884, proline 908, proline 914, proline 923, proline 932, proline 950, proline 962, proline 968, proline 983, proline 989, proline 995, proline 1004, and proline 1010 each carry 4-hydroxyproline. Over residues 917–943 (SGEKGSPGSDGPAGAPGIPGPQGIAGQ) the composition is skewed to low complexity. The span at 982 to 997 (PPGPSGPPGLGGPPGE) shows a compositional bias: pro residues. Residue lysine 1019 is modified to 5-hydroxylysine. The segment covering 1028 to 1043 (SGPPGAPGAPGAPGPV) has biased composition (pro residues). 4-hydroxyproline occurs at positions 1031, 1034, and 1037. Over residues 1064–1078 (AGPSGVRGAPGPAGA) the composition is skewed to low complexity. The span at 1079 to 1093 (RGDKGEAGEQGERGM) shows a compositional bias: basic and acidic residues. Position 1082 is a 5-hydroxylysine (lysine 1082). Lysine 1094 is subject to 5-hydroxylysine; alternate. The O-linked (Gal...) hydroxylysine; alternate glycan is linked to lysine 1094. 2 positions are modified to 4-hydroxyproline: proline 1106 and proline 1109. Over residues 1120-1129 (PSGPAGPRGP) the composition is skewed to pro residues. A 4-hydroxyproline mark is found at proline 1130 and proline 1145. A compositionally biased stretch (low complexity) spans 1130-1145 (PGSSGSTGKDGVNGLP). At proline 1150 the chain carries 3-hydroxyproline. The residue at position 1151 (proline 1151) is a 4-hydroxyproline. The span at 1163–1178 (AGPPGPPGPPGPPGPP) shows a compositional bias: pro residues. Proline 1165 carries the 3-hydroxyproline modification. Proline 1166 carries the post-translational modification 4-hydroxyproline. Residue proline 1168 is modified to 3-hydroxyproline. Proline 1169 carries the post-translational modification 4-hydroxyproline. A 3-hydroxyproline modification is found at proline 1171. Residues proline 1172, proline 1175, and proline 1178 each carry the 4-hydroxyproline modification. Lysine 1194 carries the allysine modification. The propeptide at 1205 to 1450 (DDANVVRDRD…GIDIGPVCFL (246 aa)) is C-terminal propeptide. In terms of domain architecture, Fibrillar collagen NC1 spans 1215–1450 (LEVDTTLKSL…GIDIGPVCFL (236 aa)). Cystine bridges form between cysteine 1245-cysteine 1277, cysteine 1285-cysteine 1448, and cysteine 1356-cysteine 1401. Ca(2+)-binding residues include aspartate 1263, asparagine 1265, glutamine 1266, cysteine 1268, and aspartate 1271. Asparagine 1351 carries N-linked (GlcNAc...) asparagine glycosylation.

The protein belongs to the fibrillar collagen family. Trimers of one alpha 2(I) and two alpha 1(I) chains. Post-translationally, contains mostly 4-hydroxyproline. Proline residues at the third position of the tripeptide repeating unit (G-X-Y) are hydroxylated in some or all of the chains. In terms of processing, contains 3-hydroxyproline at a few sites. This modification occurs on the first proline residue in the sequence motif Gly-Pro-Hyp, where Hyp is 4-hydroxyproline. Lysine residues at the third position of the tripeptide repeating unit (G-X-Y) are 5-hydroxylated in some or all of the chains. Post-translationally, O-glycosylated on hydroxylated lysine residues. The O-linked glycan consists of a Glc-Gal disaccharide.

The protein localises to the secreted. It is found in the extracellular space. Its subcellular location is the extracellular matrix. Type I collagen is a member of group I collagen (fibrillar forming collagen). The protein is Collagen alpha-1(I) chain (COL1A1) of Cynops pyrrhogaster (Japanese fire-bellied newt).